Here is a 232-residue protein sequence, read N- to C-terminus: Cytochrome c oxidase subunit 2 (232 aa).

Residues 1-30 are Mitochondrial intermembrane-facing; the sequence is MNNFFQDFNLLFSSSLFSSYMDWFYNFNCS. The chain crosses the membrane as a helical span at residues 31–52; that stretch reads LLFGVLSFVSTMFVYLLLSSFY. The Mitochondrial matrix segment spans residues 53 to 69; the sequence is FKSKKIEYQFGELLCSV. The helical transmembrane segment at 70–89 threads the bilayer; the sequence is FPTLILVMQMVPSLSLLYYY. At 90–232 the chain is on the mitochondrial intermembrane side; the sequence is GLMNLDSSLT…KSWCVGLLSD (143 aa). Positions 164, 199, 201, 203, 207, and 210 each coordinate Cu cation. Glutamate 201 is a Mg(2+) binding site.

The protein belongs to the cytochrome c oxidase subunit 2 family. In terms of assembly, component of the cytochrome c oxidase (complex IV, CIV), a multisubunit enzyme composed of a catalytic core of 3 subunits and several supernumerary subunits. The complex exists as a monomer or a dimer and forms supercomplexes (SCs) in the inner mitochondrial membrane with ubiquinol-cytochrome c oxidoreductase (cytochrome b-c1 complex, complex III, CIII). It depends on Cu cation as a cofactor.

It is found in the mitochondrion inner membrane. The enzyme catalyses 4 Fe(II)-[cytochrome c] + O2 + 8 H(+)(in) = 4 Fe(III)-[cytochrome c] + 2 H2O + 4 H(+)(out). In terms of biological role, component of the cytochrome c oxidase, the last enzyme in the mitochondrial electron transport chain which drives oxidative phosphorylation. The respiratory chain contains 3 multisubunit complexes succinate dehydrogenase (complex II, CII), ubiquinol-cytochrome c oxidoreductase (cytochrome b-c1 complex, complex III, CIII) and cytochrome c oxidase (complex IV, CIV), that cooperate to transfer electrons derived from NADH and succinate to molecular oxygen, creating an electrochemical gradient over the inner membrane that drives transmembrane transport and the ATP synthase. Cytochrome c oxidase is the component of the respiratory chain that catalyzes the reduction of oxygen to water. Electrons originating from reduced cytochrome c in the intermembrane space (IMS) are transferred via the dinuclear copper A center (CU(A)) of subunit 2 and heme A of subunit 1 to the active site in subunit 1, a binuclear center (BNC) formed by heme A3 and copper B (CU(B)). The BNC reduces molecular oxygen to 2 water molecules using 4 electrons from cytochrome c in the IMS and 4 protons from the mitochondrial matrix. In Ascaris suum (Pig roundworm), this protein is Cytochrome c oxidase subunit 2 (COII).